A 675-amino-acid chain; its full sequence is DNA gyrase subunit B (675 aa).

The Toprim domain maps to 453–567 (SELYVVEGDS…NGHIFLAQPP (115 aa)). Mg(2+) contacts are provided by glutamate 459, aspartate 532, and aspartate 534.

Belongs to the type II topoisomerase GyrB family. As to quaternary structure, heterotetramer, composed of two GyrA and two GyrB chains. In the heterotetramer, GyrA contains the active site tyrosine that forms a transient covalent intermediate with DNA, while GyrB binds cofactors and catalyzes ATP hydrolysis. It depends on Mg(2+) as a cofactor. Mn(2+) is required as a cofactor. Requires Ca(2+) as cofactor.

It localises to the cytoplasm. The catalysed reaction is ATP-dependent breakage, passage and rejoining of double-stranded DNA.. Its activity is regulated as follows. Inhibited by 4-quinoline drugs (nalidixic acid, ciprofloxacin, ofloxacin), although it is much less sensitive than the corresponding enzyme from E.coli. GyrB intrinsic ATPase activity inhibited by aminopyrazinamide and pyrrolamide derivatives. Its function is as follows. A type II topoisomerase that negatively supercoils closed circular double-stranded (ds) DNA in an ATP-dependent manner to modulate DNA topology and maintain chromosomes in an underwound state. Negative supercoiling favors strand separation, and DNA replication, transcription, recombination and repair, all of which involve strand separation. Also able to catalyze the interconversion of other topological isomers of dsDNA rings, including catenanes and knotted rings. Type II topoisomerases break and join 2 DNA strands simultaneously in an ATP-dependent manner. This is DNA gyrase subunit B from Mycolicibacterium smegmatis (strain ATCC 700084 / mc(2)155) (Mycobacterium smegmatis).